Reading from the N-terminus, the 165-residue chain is UPF0254 protein MMP0935 (165 aa).

Belongs to the UPF0254 family.

This chain is UPF0254 protein MMP0935, found in Methanococcus maripaludis (strain DSM 14266 / JCM 13030 / NBRC 101832 / S2 / LL).